Here is a 361-residue protein sequence, read N- to C-terminus: Ferredoxin--NADP reductase 1 (361 aa).

The FAD site is built by D44, Q52, Y57, A97, F142, D308, and S349.

The protein belongs to the ferredoxin--NADP reductase type 2 family. As to quaternary structure, homodimer. FAD is required as a cofactor.

The enzyme catalyses 2 reduced [2Fe-2S]-[ferredoxin] + NADP(+) + H(+) = 2 oxidized [2Fe-2S]-[ferredoxin] + NADPH. The chain is Ferredoxin--NADP reductase 1 from Cupriavidus necator (strain ATCC 17699 / DSM 428 / KCTC 22496 / NCIMB 10442 / H16 / Stanier 337) (Ralstonia eutropha).